The following is a 167-amino-acid chain: Leptin (167 aa).

The first 21 residues, 1–21 (MRCGSLCRFLWLWSCLPYIEA), serve as a signal peptide directing secretion. C117 and C167 form a disulfide bridge.

This sequence belongs to the leptin family.

The protein resides in the secreted. Key player in the regulation of energy balance and body weight control. Once released into the circulation, has central and peripheral effects by binding LEPR, found in many tissues, which results in the activation of several major signaling pathways. In the hypothalamus, acts as an appetite-regulating factor that induces a decrease in food intake and an increase in energy consumption by inducing anorexinogenic factors and suppressing orexigenic neuropeptides, also regulates bone mass and secretion of hypothalamo-pituitary-adrenal hormones. In the periphery, increases basal metabolism, influences reproductive function, regulates pancreatic beta-cell function and insulin secretion, is pro-angiogenic for endothelial cell and affects innate and adaptive immunity. In the arcuate nucleus of the hypothalamus, activates by depolarization POMC neurons inducing FOS and SOCS3 expression to release anorexigenic peptides and inhibits by hyperpolarization NPY neurons inducing SOCS3 with a consequent reduction on release of orexigenic peptides. In addition to its known satiety inducing effect, has a modulatory role in nutrient absorption. In the intestine, reduces glucose absorption by enterocytes by activating PKC and leading to a sequential activation of p38, PI3K and ERK signaling pathways which exerts an inhibitory effect on glucose absorption. Acts as a growth factor on certain tissues, through the activation of different signaling pathways increases expression of genes involved in cell cycle regulation such as CCND1, via JAK2-STAT3 pathway, or VEGFA, via MAPK1/3 and PI3K-AKT1 pathways. May also play an apoptotic role via JAK2-STAT3 pathway and up-regulation of BIRC5 expression. Pro-angiogenic, has mitogenic activity on vascular endothelial cells and plays a role in matrix remodeling by regulating the expression of matrix metalloproteinases (MMPs) and tissue inhibitors of metalloproteinases (TIMPs). In innate immunity, modulates the activity and function of neutrophils by increasing chemotaxis and the secretion of oxygen radicals. Increases phagocytosis by macrophages and enhances secretion of pro-inflammatory mediators. Increases cytotoxic ability of NK cells. Plays a pro-inflammatory role, in synergy with IL1B, by inducing NOS2 which promotes the production of IL6, IL8 and Prostaglandin E2, through a signaling pathway that involves JAK2, PI3K, MAP2K1/MEK1 and MAPK14/p38. In adaptive immunity, promotes the switch of memory T-cells towards T helper-1 cell immune responses. Increases CD4(+)CD25(-) T-cell proliferation and reduces autophagy during TCR (T-cell receptor) stimulation, through MTOR signaling pathway activation and BCL2 up-regulation. The sequence is that of Leptin (LEP) from Halichoerus grypus (Gray seal).